Reading from the N-terminus, the 631-residue chain is 1-deoxy-D-xylulose-5-phosphate synthase (631 aa).

Residues His-73 and Gly-114 to Ser-116 contribute to the thiamine diphosphate site. Asp-145 serves as a coordination point for Mg(2+). Thiamine diphosphate-binding positions include Gly-146 to Ala-147, Asn-174, Tyr-285, and Glu-366. Residue Asn-174 participates in Mg(2+) binding.

This sequence belongs to the transketolase family. DXPS subfamily. Homodimer. Mg(2+) serves as cofactor. It depends on thiamine diphosphate as a cofactor.

The catalysed reaction is D-glyceraldehyde 3-phosphate + pyruvate + H(+) = 1-deoxy-D-xylulose 5-phosphate + CO2. It participates in metabolic intermediate biosynthesis; 1-deoxy-D-xylulose 5-phosphate biosynthesis; 1-deoxy-D-xylulose 5-phosphate from D-glyceraldehyde 3-phosphate and pyruvate: step 1/1. In terms of biological role, catalyzes the acyloin condensation reaction between C atoms 2 and 3 of pyruvate and glyceraldehyde 3-phosphate to yield 1-deoxy-D-xylulose-5-phosphate (DXP). This chain is 1-deoxy-D-xylulose-5-phosphate synthase, found in Desulfitobacterium hafniense (strain DSM 10664 / DCB-2).